The sequence spans 139 residues: Plastocyanin (139 aa).

An N-terminal signal peptide occupies residues 1–34 (MKLIAASLRRLSLAVLTVLLVVSSFAVFTPSASA). One can recognise a Plastocyanin-like domain in the interval 35–139 (ETYTVKLGSD…GMVGKITVAG (105 aa)). Cu cation contacts are provided by H73, C123, H126, and M131.

This sequence belongs to the plastocyanin family. It depends on Cu(2+) as a cofactor.

It is found in the cellular thylakoid membrane. Functionally, participates in electron transfer between P700 and the cytochrome b6-f complex in photosystem I. The protein is Plastocyanin (petE) of Nostoc sp. (strain PCC 7120 / SAG 25.82 / UTEX 2576).